Here is a 124-residue protein sequence, read N- to C-terminus: Large ribosomal subunit protein bL12 (124 aa).

The protein belongs to the bacterial ribosomal protein bL12 family. Homodimer. Part of the ribosomal stalk of the 50S ribosomal subunit. Forms a multimeric L10(L12)X complex, where L10 forms an elongated spine to which 2 to 4 L12 dimers bind in a sequential fashion. Binds GTP-bound translation factors.

Functionally, forms part of the ribosomal stalk which helps the ribosome interact with GTP-bound translation factors. Is thus essential for accurate translation. In Phytoplasma australiense, this protein is Large ribosomal subunit protein bL12.